The sequence spans 5085 residues: Protein piccolo (5085 aa).

The segment covering 1-20 (MGNEASLEGEGLPEGLAAAA) has biased composition (low complexity). Disordered stretches follow at residues 1–142 (MGNE…DFKE) and 173–516 (DLIS…TPAQ). A compositionally biased stretch (pro residues) spans 92–101 (PGKPPDPGRP). Basic and acidic residues-rich tracts occupy residues 110–121 (RTTDTFRSEQKL), 132–142 (KESKSRTDFKE), and 184–198 (ETTK…EQGK). Residues Ser211 and Ser231 each carry the phosphoserine modification. The span at 227–240 (QQDSSPKSVSSQQA) shows a compositional bias: polar residues. The segment covering 253–268 (PSQQSPAQTPAQQASP) has biased composition (low complexity). Composition is skewed to polar residues over residues 275–285 (QPGSAKATVQQ), 318–332 (KTSS…SLAQ), and 375–391 (TPAQ…QQPG). A 12 X 10 AA tandem approximate repeats of P-A-K-P-Q-P-Q-Q-P-X region spans residues 372-491 (PTKTPAQQSG…LAKPSAQQPT (120 aa)). Over residues 392–408 (PTKPSPQQPIPAKPQPQ) the composition is skewed to pro residues. Low complexity predominate over residues 409–423 (QPVATKTQPQQSAPA). Residues 424-472 (KPQPQQPAPAKPQPQQPTPAKPQPQPPTPAKPQPQPPTATKPQPQPPTA) show a composition bias toward pro residues. Over residues 486–499 (SAQQPTKSISQTVT) the composition is skewed to polar residues. The C4-type zinc finger occupies 523-547 (CPLCNTTELLLHIPEKANFNTCTEC). 5 disordered regions span residues 586–880 (AAIP…TVTG), 896–1012 (LIST…ACPL), 1069–1357 (QLGD…PSDL), 1373–1604 (STLV…EELV), and 1622–1815 (TIAD…SDPE). The segment covering 596 to 613 (PKAATAPTATASKSPVPS) has biased composition (low complexity). The segment covering 618–654 (PKKEPPSKQDSPKALESKKPPEPKKPPEPKKPPEPKK) has biased composition (basic and acidic residues). The segment covering 672–682 (APQLPVAEALP) has biased composition (low complexity). Over residues 683 to 693 (EPAPPKEPSGP) the composition is skewed to pro residues. Positions 705 to 717 (VEPKQPKMTETRA) are enriched in basic and acidic residues. The span at 718 to 767 (DIQSSSTTKPDILSSQVQSQAQVKTASPLKTDSAKPSQSFPPTGEKTTPL) shows a compositional bias: polar residues. Residues 790–808 (ESKDPKHIDPIQKKDEPKK) are compositionally biased toward basic and acidic residues. Ser857 and Ser869 each carry phosphoserine. 3 stretches are compositionally biased toward polar residues: residues 867–878 (PKSQPTTPQETV), 896–906 (LISTAGQQGPH), and 917–936 (QAPT…STGQ). Phosphothreonine is present on Thr873. Positions 990 to 1004 (EPEKAVPAHKPDKTT) are enriched in basic and acidic residues. The C4-type zinc finger occupies 1010-1033 (CPLCRTELNLGSQEPPNFNTCTEC). A compositionally biased stretch (pro residues) spans 1077–1092 (PPAPSGPKASPMPAPA). Over residues 1110–1129 (KEAEGKTEAEKPVPEKETAS) the composition is skewed to basic and acidic residues. Thr1133 is subject to Phosphothreonine. 3 stretches are compositionally biased toward basic and acidic residues: residues 1141-1150 (QKLEESEGKK), 1157-1199 (PEKK…KLPP), and 1274-1295 (SSKD…DKSD). Positions 1300 to 1318 (QQPKSPQGLSDTGYSSDGI) are enriched in polar residues. Residues Ser1304, Ser1314, Ser1315, Ser1344, Ser1346, Ser1349, Ser1350, and Ser1353 each carry the phosphoserine modification. Over residues 1331-1345 (SDEKDLLKGLKKDSF) the composition is skewed to basic and acidic residues. Residues 1346 to 1355 (SQESSPSSPS) show a composition bias toward low complexity. Basic and acidic residues predominate over residues 1378–1396 (EKAEKKTQPQKISPEKPQD). The span at 1397–1407 (QQKTQTASETL) shows a compositional bias: polar residues. Positions 1417–1456 (KESQEKKVSPKKDSEQGFPSRKEHKEKPELVDDLSPRRAS) are enriched in basic and acidic residues. Phosphoserine occurs at positions 1451, 1463, 1464, 1466, 1469, 1493, 1496, 1517, and 1519. Residues 1511–1523 (SADEDASGSEDEE) show a composition bias toward acidic residues. Thr1564 carries the post-translational modification Phosphothreonine. A phosphoserine mark is found at Ser1565, Ser1575, and Ser1587. Acidic residues predominate over residues 1578-1587 (DEDDETFDES). Basic and acidic residues predominate over residues 1588–1599 (PELKFRETKSQE). Over residues 1622-1635 (TIADKYSSESSQKK) the composition is skewed to polar residues. A compositionally biased stretch (acidic residues) spans 1640 to 1650 (FDEEPELEMES). Ser1650 is subject to Phosphoserine. Residue Thr1652 is modified to Phosphothreonine. Phosphoserine occurs at positions 1654 and 1659. The segment covering 1662–1679 (EGSSSLHASSFTPGTSPT) has biased composition (polar residues). Residues 1719–1732 (DSSEEEELREEEEL) are compositionally biased toward acidic residues. Residues Ser1720 and Ser1721 each carry the phosphoserine modification. Positions 1733 to 1746 (LKEQEKQRELEQQQ) are enriched in basic and acidic residues. Thr1772 bears the Phosphothreonine mark. The residue at position 1778 (Ser1778) is a Phosphoserine. A compositionally biased stretch (basic and acidic residues) spans 1787-1802 (EELRQAAEMEELHRSS). 4 positions are modified to phosphoserine: Ser1807, Ser1812, Ser1820, and Ser1841. 3 disordered regions span residues 2116–2139 (PSES…SSVC), 2275–2385 (ELTK…PTYP), and 2456–2486 (KPPI…TGLS). The segment covering 2121-2139 (TSVPPSDTPSLTSSISSVC) has biased composition (low complexity). The span at 2350–2384 (QPPPPPPPPPPSPSTSSPPPTPPLPPATSPKPPTY) shows a compositional bias: pro residues. Position 2511 is a phosphoserine (Ser2511). An O-linked (GlcNAc) threonine glycan is attached at Thr2702. Ser2976 is a glycosylation site (O-linked (GlcNAc) serine). The residue at position 3014 (Thr3014) is a Phosphothreonine. Disordered stretches follow at residues 3350-3457 (KEEK…PLSK) and 3503-3572 (KTYK…LYSP). A Phosphoserine modification is found at Ser3374. Residues 3377–3386 (DDPRNLKKIV) are compositionally biased toward basic and acidic residues. Ser3388 carries the post-translational modification Phosphoserine. A phosphothreonine mark is found at Thr3392 and Thr3419. The segment covering 3419-3428 (TDDEDQDEWD) has biased composition (acidic residues). Polar residues predominate over residues 3511–3523 (GCQTETDSDTQSP). Phosphoserine occurs at positions 3522, 3530, 3561, 3565, 3571, 3574, 3577, 3598, 3624, 3626, and 3632. 2 disordered regions span residues 3602–3695 (VLHP…ASRR) and 3774–3816 (AEDR…FIPP). Polar residues-rich tracts occupy residues 3647–3663 (EGFT…SGTQ) and 3679–3691 (STGT…TMGT). The residue at position 3781 (Ser3781) is a Phosphoserine. The span at 3791–3803 (SRVESQHGVERPR) shows a compositional bias: basic and acidic residues. The span at 3805-3816 (APQTEFSQFIPP) shows a compositional bias: polar residues. A phosphoserine mark is found at Ser4034 and Ser4150. 2 disordered regions span residues 4225-4248 (ADKP…YGLD) and 4272-4291 (VSFG…LPIS). Over residues 4228 to 4248 (PYSSGSRSRPSSRPSSVYGLD) the composition is skewed to low complexity. Positions 4275 to 4291 (GHSSSSARTKPTSLPIS) are enriched in polar residues. Phosphoserine occurs at positions 4304, 4308, 4311, 4340, and 4376. The segment at 4335 to 4357 (RDQFGSSHSLPEVQQHMREESRT) is disordered. In terms of domain architecture, PDZ spans 4442–4536 (RVKITRDFKD…EAEICVRLDL (95 aa)). Positions 4589–4638 (VEKGSHAHSGPTSAGSSSVPSPGQPGSPSVSKKKHSSTKPTDGPKAASHP) are disordered. Residues 4595 to 4618 (AHSGPTSAGSSSVPSPGQPGSPSV) show a composition bias toward low complexity. A Phosphoserine modification is found at Ser4609. In terms of domain architecture, C2 1 spans 4639-4768 (ITGEIQLQIN…SHLDNTPRWY (130 aa)). Residues Asp4668 and Asp4674 each contribute to the Ca(2+) site. Ser4723 bears the Phosphoserine mark. Positions 4738, 4740, 4743, and 4746 each coordinate Ca(2+). Disordered regions lie at residues 4775-4851 (ESID…SVAQ) and 4874-4908 (QPTK…SEGS). Low complexity-rich tracts occupy residues 4783–4795 (HSSQ…PKPS) and 4822–4832 (SSPGSSKSSSE). The segment covering 4840–4851 (PSRSQSKTSVAQ) has biased composition (polar residues). Low complexity predominate over residues 4886 to 4908 (SSVSTGSSGSSVGSGYSVDSEGS). One can recognise a C2 2 domain in the interval 4950 to 5075 (VMGEIKLALK…DLRKRIVNWH (126 aa)).

As to quaternary structure, interacts with BSN, ERC2/CAST1, RIMS1 and UNC13A. Interacts (via C-terminus) with TRIO (via N-terminus). Interacts with CTBP1. Interacts with SIAH1; this interaction negatively regulates SIAH1 E3 ligase activity. Directly interacts with GIT1 and GIT2. The cofactor is Ca(2+). As to expression, expressed in brain (at protein level).

It is found in the presynaptic active zone. In terms of biological role, scaffold protein of the presynaptic cytomatrix at the active zone (CAZ) which is the place in the synapse where neurotransmitter is released. After synthesis, participates in the formation of Golgi-derived membranous organelles termed Piccolo-Bassoon transport vesicles (PTVs) that are transported along axons to sites of nascent synaptic contacts. At the presynaptic active zone, regulates the spatial organization of synaptic vesicle cluster, the protein complexes that execute membrane fusion and compensatory endocytosis. Organizes as well the readily releasable pool of synaptic vesicles and safeguards a fraction of them to be not immediately available for action potential-induced release. Also functions in processes other than assembly such as the regulation of specific presynaptic protein ubiquitination by interacting with SIAH1 or the regulation of presynaptic autophagy. Also mediates synapse to nucleus communication leading to reconfiguration of gene expression by associating with the transcriptional corepressor CTBP1 and by subsequently reducing the size of its pool available for nuclear import. The sequence is that of Protein piccolo (Pclo) from Rattus norvegicus (Rat).